The chain runs to 205 residues: Holliday junction branch migration complex subunit RuvA (205 aa).

Positions 1–64 are domain I; that stretch reads MIGRLRGVLV…EDAQLLYGFI (64 aa). Positions 65-143 are domain II; that stretch reads TKQERALFRL…SLMEASAGSE (79 aa). The flexible linker stretch occupies residues 144 to 156; sequence REFVLQSNYSPTP. Residues 157 to 205 form a domain III region; sequence TVNSAEEDAISALISLGYKPPQASKSVSAAYKEGMDSETLIKAALKSML.

It belongs to the RuvA family. Homotetramer. Forms an RuvA(8)-RuvB(12)-Holliday junction (HJ) complex. HJ DNA is sandwiched between 2 RuvA tetramers; dsDNA enters through RuvA and exits via RuvB. An RuvB hexamer assembles on each DNA strand where it exits the tetramer. Each RuvB hexamer is contacted by two RuvA subunits (via domain III) on 2 adjacent RuvB subunits; this complex drives branch migration. In the full resolvosome a probable DNA-RuvA(4)-RuvB(12)-RuvC(2) complex forms which resolves the HJ.

It localises to the cytoplasm. Functionally, the RuvA-RuvB-RuvC complex processes Holliday junction (HJ) DNA during genetic recombination and DNA repair, while the RuvA-RuvB complex plays an important role in the rescue of blocked DNA replication forks via replication fork reversal (RFR). RuvA specifically binds to HJ cruciform DNA, conferring on it an open structure. The RuvB hexamer acts as an ATP-dependent pump, pulling dsDNA into and through the RuvAB complex. HJ branch migration allows RuvC to scan DNA until it finds its consensus sequence, where it cleaves and resolves the cruciform DNA. The protein is Holliday junction branch migration complex subunit RuvA of Shewanella sp. (strain W3-18-1).